The following is a 340-amino-acid chain: Beta-ketoacyl-[acyl-carrier-protein] synthase III (340 aa).

Residues C122 and H260 contribute to the active site. Residues 261 to 265 are ACP-binding; that stretch reads QANTR. N291 is an active-site residue.

Belongs to the thiolase-like superfamily. FabH family. In terms of assembly, homodimer.

It is found in the cytoplasm. The enzyme catalyses malonyl-[ACP] + acetyl-CoA + H(+) = 3-oxobutanoyl-[ACP] + CO2 + CoA. It functions in the pathway lipid metabolism; fatty acid biosynthesis. Its function is as follows. Catalyzes the condensation reaction of fatty acid synthesis by the addition to an acyl acceptor of two carbons from malonyl-ACP. Catalyzes the first condensation reaction which initiates fatty acid synthesis and may therefore play a role in governing the total rate of fatty acid production. Possesses both acetoacetyl-ACP synthase and acetyl transacylase activities. Its substrate specificity determines the biosynthesis of branched-chain and/or straight-chain of fatty acids. The sequence is that of Beta-ketoacyl-[acyl-carrier-protein] synthase III from Mycobacteroides abscessus (strain ATCC 19977 / DSM 44196 / CCUG 20993 / CIP 104536 / JCM 13569 / NCTC 13031 / TMC 1543 / L948) (Mycobacterium abscessus).